Here is a 304-residue protein sequence, read N- to C-terminus: Sulfate adenylyltransferase subunit 2 1 (304 aa).

Belongs to the PAPS reductase family. CysD subfamily. As to quaternary structure, heterodimer composed of CysD, the smaller subunit, and CysN.

The enzyme catalyses sulfate + ATP + H(+) = adenosine 5'-phosphosulfate + diphosphate. The protein operates within sulfur metabolism; hydrogen sulfide biosynthesis; sulfite from sulfate: step 1/3. Its function is as follows. With CysN forms the ATP sulfurylase (ATPS) that catalyzes the adenylation of sulfate producing adenosine 5'-phosphosulfate (APS) and diphosphate, the first enzymatic step in sulfur assimilation pathway. APS synthesis involves the formation of a high-energy phosphoric-sulfuric acid anhydride bond driven by GTP hydrolysis by CysN coupled to ATP hydrolysis by CysD. The sequence is that of Sulfate adenylyltransferase subunit 2 1 from Marinobacter nauticus (strain ATCC 700491 / DSM 11845 / VT8) (Marinobacter aquaeolei).